The chain runs to 129 residues: Large ribosomal subunit protein bL17 (129 aa).

The protein belongs to the bacterial ribosomal protein bL17 family. In terms of assembly, part of the 50S ribosomal subunit. Contacts protein L32.

This Hahella chejuensis (strain KCTC 2396) protein is Large ribosomal subunit protein bL17.